A 155-amino-acid polypeptide reads, in one-letter code: FAD synthase (155 aa).

Residues 9–10 (TF), 14–17 (HPGH), and D92 each bind ATP.

The protein belongs to the archaeal FAD synthase family. In terms of assembly, homodimer. It depends on a divalent metal cation as a cofactor.

It catalyses the reaction FMN + ATP + H(+) = FAD + diphosphate. Its pathway is cofactor biosynthesis; FAD biosynthesis; FAD from FMN: step 1/1. Functionally, catalyzes the transfer of the AMP portion of ATP to flavin mononucleotide (FMN) to produce flavin adenine dinucleotide (FAD) coenzyme. The protein is FAD synthase of Archaeoglobus profundus (strain DSM 5631 / JCM 9629 / NBRC 100127 / Av18).